We begin with the raw amino-acid sequence, 602 residues long: Cholinesterase (602 aa).

Residues 1 to 28 (MQSRSTVIYIRFVLWFLLLWVLFEKSHT) form the signal peptide. N-linked (GlcNAc...) asparagine glycosylation is found at N85 and N134. 144–145 (GS) lines the substrate pocket. The Acyl-ester intermediate role is filled by S226. At S226 the chain carries Phosphoserine. Residues N269 and N284 are each glycosylated (N-linked (GlcNAc...) asparagine). The active-site Charge relay system is the E353. The N-linked (GlcNAc...) asparagine glycan is linked to N369. Residue H466 is the Charge relay system of the active site. N-linked (GlcNAc...) asparagine glycans are attached at residues N483, N509, N513, and N514.

It belongs to the type-B carboxylesterase/lipase family. Homotetramer; disulfide-linked. Dimer of dimers. As to expression, present in most cells except erythrocytes.

The protein localises to the secreted. The catalysed reaction is an acylcholine + H2O = a carboxylate + choline + H(+). Esterase with broad substrate specificity. Contributes to the inactivation of the neurotransmitter acetylcholine. Can degrade neurotoxic organophosphate esters. This Bos taurus (Bovine) protein is Cholinesterase (BCHE).